A 324-amino-acid polypeptide reads, in one-letter code: MLEQVMVLAIILSFLITVILSPLFIPFLRRLKFGQSIREEGPKSHQKKTGTPTMGGIMILLSIVVTTLLMTRKFATLSVETYLLLFVTIGYGLLGFLDDFIKVVMKRNLGLTSRQKLIGQLMIAIVFYFVYQRSGFSTALHIPGTDLSINLGFGYVLLLIFMLVGGSNAVNLTDGLDGLLAGTAAIAFGAYAVLAWNQGQYDIAIFCVSVVGAVLGFLVFNAHPAKVFMGDTGSLALGGAIATVAILTKLEILLVIIGGVFVIETLSVIIQVISFKTTGKRVFRMSPLHHHYELIGWSEWRVVVTFWAVGLLFAMLGIYIEVWI.

Helical transmembrane passes span Val5 to Ile25, Gly50 to Met70, Leu77 to Leu97, Leu117 to Ser137, Leu147 to Ser167, Leu176 to Trp196, Ile203 to His223, Val227 to Leu247, Leu250 to Ile270, and Val304 to Ile324.

This sequence belongs to the glycosyltransferase 4 family. MraY subfamily. Requires Mg(2+) as cofactor.

Its subcellular location is the cell membrane. It catalyses the reaction UDP-N-acetyl-alpha-D-muramoyl-L-alanyl-gamma-D-glutamyl-meso-2,6-diaminopimeloyl-D-alanyl-D-alanine + di-trans,octa-cis-undecaprenyl phosphate = di-trans,octa-cis-undecaprenyl diphospho-N-acetyl-alpha-D-muramoyl-L-alanyl-D-glutamyl-meso-2,6-diaminopimeloyl-D-alanyl-D-alanine + UMP. Its pathway is cell wall biogenesis; peptidoglycan biosynthesis. Catalyzes the initial step of the lipid cycle reactions in the biosynthesis of the cell wall peptidoglycan: transfers peptidoglycan precursor phospho-MurNAc-pentapeptide from UDP-MurNAc-pentapeptide onto the lipid carrier undecaprenyl phosphate, yielding undecaprenyl-pyrophosphoryl-MurNAc-pentapeptide, known as lipid I. The polypeptide is Phospho-N-acetylmuramoyl-pentapeptide-transferase (Geobacillus sp. (strain WCH70)).